The sequence spans 421 residues: MRKIGLAWQIFIGLILGIIVGAIFYGNPKVAAYLQPIGDIFLRLIKMIVIPIVISSLVVGVASVGDLKKLGKLGGKTIIYFEIITTIAIVVGLLAANIFQPGAGVNMKSLEKTDIQSYVDTTNEVQHHSMVETFVNIVPKNIFESLSTGDMLPIIFFSVMFGLGVAAIGEKGKPVLQFFQGTAEAMFYVTNQIMKFAPFGVFALIGVTVSKFGVESLIPLSKLVIVVYATMLFFIFAVLGGVAKLFGINIFHIIKILKDELILAYSTASSETVLPRIMDKMEKFGCPKAITSFVIPTGYSFNLDGSTLYQALAAIFIAQLYGIDMSVSQQISLLLVLMVTSKGIAGVPGVSFVVLLATLGTVGIPVEGLAFIAGIDRILDMARTAVNVIGNSLAAIIMSKWEGQYNEEKGKQYLAELQQSA.

At 1–3 (MRK) the chain is on the cytoplasmic side. A helical membrane pass occupies residues 4-24 (IGLAWQIFIGLILGIIVGAIF). Topologically, residues 25-43 (YGNPKVAAYLQPIGDIFLR) are extracellular. The helical transmembrane segment at 44-64 (LIKMIVIPIVISSLVVGVASV) threads the bilayer. The Cytoplasmic segment spans residues 65–77 (GDLKKLGKLGGKT). The helical transmembrane segment at 78–98 (IIYFEIITTIAIVVGLLAANI) threads the bilayer. Topologically, residues 99 to 148 (FQPGAGVNMKSLEKTDIQSYVDTTNEVQHHSMVETFVNIVPKNIFESLST) are extracellular. The chain crosses the membrane as a helical span at residues 149–169 (GDMLPIIFFSVMFGLGVAAIG). At 170–198 (EKGKPVLQFFQGTAEAMFYVTNQIMKFAP) the chain is on the cytoplasmic side. Residues 199–219 (FGVFALIGVTVSKFGVESLIP) form a helical membrane-spanning segment. Residues 220 to 222 (LSK) are Extracellular-facing. The chain crosses the membrane as a helical span at residues 223–243 (LVIVVYATMLFFIFAVLGGVA). Lys244 is a topological domain (cytoplasmic). Residues 245–265 (LFGINIFHIIKILKDELILAY) form a helical membrane-spanning segment. Over 266 to 306 (STASSETVLPRIMDKMEKFGCPKAITSFVIPTGYSFNLDGS) the chain is Extracellular. The helical transmembrane segment at 307-327 (TLYQALAAIFIAQLYGIDMSV) threads the bilayer. Topologically, residues 328–330 (SQQ) are cytoplasmic. The next 2 helical transmembrane spans lie at 331 to 351 (ISLLLVLMVTSKGIAGVPGVS) and 352 to 372 (FVVLLATLGTVGIPVEGLAFI). The Cytoplasmic segment spans residues 373 to 421 (AGIDRILDMARTAVNVIGNSLAAIIMSKWEGQYNEEKGKQYLAELQQSA).

It belongs to the dicarboxylate/amino acid:cation symporter (DAACS) (TC 2.A.23) family. As to quaternary structure, homotrimer.

It is found in the cell membrane. Its function is as follows. This carrier protein is part of the Na(+)-dependent, binding-protein-independent glutamate-aspartate transport system. The chain is Proton/sodium-glutamate symport protein (gltT) from Bacillus caldotenax.